Reading from the N-terminus, the 208-residue chain is Frataxin, mitochondrial (208 aa).

A mitochondrion-targeting transit peptide spans 1-40 (MWTFGRRAAAGLLPRTASRASAWVRNPRGRERIGTCGRRG).

Belongs to the frataxin family. As to quaternary structure, component of the mitochondrial core iron-sulfur cluster (ISC) complex composed of NFS1, LYRM4, NDUFAB1, ISCU, FXN, and FDX2; this complex is a heterohexamer containing two copies of each monomer. Homodimer. Monomer (probable predominant form). Oligomer. Monomers and polymeric aggregates of &gt;1 MDa have been isolated from mitochondria. A small fraction of heterologous overexpressed recombinant frataxin forms high-molecular weight aggregates that incorporate iron. Interacts with LYRM4. Interacts (via ferrous form) with ISCU; the interaction is possible when both are bound to the dimeric form of the cysteine desulfurase complex (NFS1:LYRM4) and the interaction enhances FXN interaction to the dimeric form of the cysteine desulfurase complex (NFS1:LYRM4). Interacts with FECH; one iron-bound FXN monomer seems to interact with a FECH homodimer. Interacts with SDHA and SDHB. Interacts with ACO2; the interaction is dependent on citrate. Interacts with HSPA9. In terms of assembly, interacts with ACO1. Interacts with ISCU (cytoplasmic form). Post-translationally, processed in two steps by mitochondrial processing peptidase (MPP). MPP first cleaves the precursor to intermediate form and subsequently converts the intermediate to yield frataxin mature form (frataxin(81-210)) which is the predominant form. The additional forms, frataxin(56-210) and frataxin(78-210), seem to be produced when the normal maturation process is impaired; their physiological relevance is unsure.

It localises to the mitochondrion. The protein localises to the cytoplasm. The protein resides in the cytosol. It catalyses the reaction 4 Fe(2+) + O2 + 4 H(+) = 4 Fe(3+) + 2 H2O. Functions as an activator of persulfide transfer to the scaffoding protein ISCU as component of the core iron-sulfur cluster (ISC) assembly complex and participates to the [2Fe-2S] cluster assembly. Accelerates sulfur transfer from NFS1 persulfide intermediate to ISCU and to small thiols such as L-cysteine and glutathione leading to persulfuration of these thiols and ultimately sulfide release. Binds ferrous ion and is released from FXN upon the addition of both L-cysteine and reduced FDX2 during [2Fe-2S] cluster assembly. The core iron-sulfur cluster (ISC) assembly complex is involved in the de novo synthesis of a [2Fe-2S] cluster, the first step of the mitochondrial iron-sulfur protein biogenesis. This process is initiated by the cysteine desulfurase complex (NFS1:LYRM4:NDUFAB1) that produces persulfide which is delivered on the scaffold protein ISCU in a FXN-dependent manner. Then this complex is stabilized by FDX2 which provides reducing equivalents to accomplish the [2Fe-2S] cluster assembly. Finally, the [2Fe-2S] cluster is transferred from ISCU to chaperone proteins, including HSCB, HSPA9 and GLRX5. May play a role in the protection against iron-catalyzed oxidative stress through its ability to catalyze the oxidation of Fe(2+) to Fe(3+); the oligomeric form but not the monomeric form has in vitro ferroxidase activity. May be able to store large amounts of iron in the form of a ferrihydrite mineral by oligomerization; however, the physiological relevance is unsure as reports are conflicting and the function has only been shown using heterologous overexpression systems. May function as an iron chaperone protein that protects the aconitase [4Fe-4S]2+ cluster from disassembly and promotes enzyme reactivation. May play a role as a high affinity iron binding partner for FECH that is capable of both delivering iron to ferrochelatase and mediating the terminal step in mitochondrial heme biosynthesis. In terms of biological role, modulates the RNA-binding activity of ACO1. May be involved in the cytoplasmic iron-sulfur protein biogenesis. May contribute to oxidative stress resistance and overall cell survival. This is Frataxin, mitochondrial from Rattus norvegicus (Rat).